We begin with the raw amino-acid sequence, 395 residues long: Elongation factor Tu (395 aa).

The 200-residue stretch at Lys6 to Thr205 folds into the tr-type G domain. The segment at Gly15 to Thr22 is G1. Gly15–Thr22 is a GTP binding site. Thr22 contributes to the Mg(2+) binding site. The G2 stretch occupies residues Gly59–Ser63. A G3 region spans residues Asp80 to Gly83. GTP contacts are provided by residues Asp80–His84 and Asn135–Asp138. The G4 stretch occupies residues Asn135 to Asp138. Residues Ser173–Val175 are G5.

This sequence belongs to the TRAFAC class translation factor GTPase superfamily. Classic translation factor GTPase family. EF-Tu/EF-1A subfamily. As to quaternary structure, monomer.

It is found in the cytoplasm. The enzyme catalyses GTP + H2O = GDP + phosphate + H(+). Functionally, GTP hydrolase that promotes the GTP-dependent binding of aminoacyl-tRNA to the A-site of ribosomes during protein biosynthesis. The chain is Elongation factor Tu from Ehrlichia chaffeensis (strain ATCC CRL-10679 / Arkansas).